A 139-amino-acid chain; its full sequence is Sec-independent protein translocase protein TatB (139 aa).

The helical transmembrane segment at 1 to 21 threads the bilayer; that stretch reads MFDMGFLELMLIGVVALLVLG. Residues 66–86 show a composition bias toward basic and acidic residues; it reads QQRKLDAGLGKVRDEVERHGD. The segment at 66–139 is disordered; sequence QQRKLDAGLG…APSAKDSNAP (74 aa).

Belongs to the TatB family. In terms of assembly, the Tat system comprises two distinct complexes: a TatABC complex, containing multiple copies of TatA, TatB and TatC subunits, and a separate TatA complex, containing only TatA subunits. Substrates initially bind to the TatABC complex, which probably triggers association of the separate TatA complex to form the active translocon.

The protein resides in the cell inner membrane. Functionally, part of the twin-arginine translocation (Tat) system that transports large folded proteins containing a characteristic twin-arginine motif in their signal peptide across membranes. Together with TatC, TatB is part of a receptor directly interacting with Tat signal peptides. TatB may form an oligomeric binding site that transiently accommodates folded Tat precursor proteins before their translocation. The polypeptide is Sec-independent protein translocase protein TatB (Chromohalobacter salexigens (strain ATCC BAA-138 / DSM 3043 / CIP 106854 / NCIMB 13768 / 1H11)).